The sequence spans 299 residues: uncharacterized protein (299 aa).

This is an uncharacterized protein from Mycobacterium tuberculosis (strain ATCC 25618 / H37Rv).